The chain runs to 493 residues: Proline--tRNA ligase (493 aa).

Belongs to the class-II aminoacyl-tRNA synthetase family. ProS type 3 subfamily. In terms of assembly, homodimer.

It localises to the cytoplasm. It catalyses the reaction tRNA(Pro) + L-proline + ATP = L-prolyl-tRNA(Pro) + AMP + diphosphate. In terms of biological role, catalyzes the attachment of proline to tRNA(Pro) in a two-step reaction: proline is first activated by ATP to form Pro-AMP and then transferred to the acceptor end of tRNA(Pro). The protein is Proline--tRNA ligase of Porphyromonas gingivalis (strain ATCC BAA-308 / W83).